Here is an 856-residue protein sequence, read N- to C-terminus: Subtilisin-like protease SBT2.2 (856 aa).

The first 21 residues, 1 to 21 (MRRVLMVNFGVLLLFCFGVLS), serve as a signal peptide directing secretion. Positions 22–159 (NSFGQDNGGD…IVLDFSVRTA (138 aa)) are cleaved as a propeptide — activation peptide. Residues N35 and N85 are each glycosylated (N-linked (GlcNAc...) asparagine). One can recognise an Inhibitor I9 domain in the interval 40 to 159 (VYIVTLRQAS…IVLDFSVRTA (120 aa)). Residues 164-709 (PQFMGLPKGA…NGFVNATAAL (546 aa)) form the Peptidase S8 domain. D193 functions as the Charge relay system in the catalytic mechanism. N204 and N255 each carry an N-linked (GlcNAc...) asparagine glycan. The Charge relay system role is filled by H269. N-linked (GlcNAc...) asparagine glycans are attached at residues N412, N441, N495, N540, and N568. One can recognise a PA domain in the interval 432-528 (MISALDALKN…MDMPGIIIPS (97 aa)). S634 serves as the catalytic Charge relay system. 7 N-linked (GlcNAc...) asparagine glycosylation sites follow: N704, N730, N738, N748, N767, N782, and N823.

This sequence belongs to the peptidase S8 family.

Its subcellular location is the secreted. This is Subtilisin-like protease SBT2.2 from Arabidopsis thaliana (Mouse-ear cress).